A 478-amino-acid chain; its full sequence is CDK5 and ABL1 enzyme substrate 2 (478 aa).

The tract at residues 1 to 121 (MAAAAAGGAP…GLGLDGQRQR (121 aa)) is disordered. The span at 11-24 (GPAPGPAGPPPPAA) shows a compositional bias: pro residues. The span at 25–35 (PTSAARAPPQA) shows a compositional bias: low complexity. Residues 36–46 (LRRRGDSRRRQ) are compositionally biased toward basic residues. Residues 69 to 92 (EKPPPPPAEAREPPAPPPPEPPTG) show a composition bias toward pro residues. Phosphoserine is present on residues serine 130 and serine 208. Positions 257 to 296 (SDSHGLLPTPRPSVPRTLPGSRHKPAPTKSAPASTELGSD) are disordered.

Belongs to the cyclin family. As to quaternary structure, binds to CDK3, CDK5 and ABL1. The C-terminal cyclin-box-like region binds to CDK5.

In terms of biological role, unknown. Probably involved in G1-S cell cycle transition. This Homo sapiens (Human) protein is CDK5 and ABL1 enzyme substrate 2 (CABLES2).